The primary structure comprises 406 residues: Renin (406 aa).

Residues 1-23 (MDGWRRMPRWGLLLLLWGSCTFG) form the signal peptide. Positions 24-66 (LPTDTTTFKRIFLKRMPSIRESLKERGVDMARLGPEWSQPMKR) are cleaved as a propeptide — activation peptide. Asparagine 71 carries an N-linked (GlcNAc...) asparagine glycan. The 318-residue stretch at 86-403 (YYGEIGIGTP…DRRNNRIGFA (318 aa)) folds into the Peptidase A1 domain. Aspartate 104 is an active-site residue. Cysteine 117 and cysteine 124 are disulfide-bonded. N-linked (GlcNAc...) asparagine glycosylation occurs at asparagine 141. A disulfide bridge links cysteine 283 with cysteine 287. The active site involves aspartate 292. A disulfide bond links cysteine 325 and cysteine 362.

This sequence belongs to the peptidase A1 family. Interacts with ATP6AP2.

The protein localises to the secreted. It is found in the membrane. The catalysed reaction is Cleavage of Leu-|-Xaa bond in angiotensinogen to generate angiotensin I.. Its activity is regulated as follows. Interaction with ATP6AP2 results in a 5-fold increased efficiency in angiotensinogen processing. Its function is as follows. Renin is a highly specific endopeptidase, whose only known function is to generate angiotensin I from angiotensinogen in the plasma, initiating a cascade of reactions that produce an elevation of blood pressure and increased sodium retention by the kidney. This chain is Renin (REN), found in Macaca fascicularis (Crab-eating macaque).